A 621-amino-acid polypeptide reads, in one-letter code: Stimulated by retinoic acid gene 6 protein-like (621 aa).

Over 1 to 21 (MLAASTRTRQINITCDNPVDR) the chain is Extracellular. N-linked (GlcNAc...) asparagine glycosylation is present at Asn-12. The helical transmembrane segment at 22–42 (EVFLHYSLIPSLCIILVLSFL) threads the bilayer. The Cytoplasmic segment spans residues 43–53 (QRREHRRQRDD). A helical transmembrane segment spans residues 54-74 (TSYLLGNHFGIIVPLDFVGTF). Over 75–110 (SNRWSYGAAFGATANKVMFLFSEGYQPLTVPQWAQA) the chain is Extracellular. Residues 111–131 (FVLFIGGMEVGLSYFPFFACL) traverse the membrane as a helical segment. Over 132–137 (SSEFQL) the chain is Cytoplasmic. A helical membrane pass occupies residues 138-158 (VSSILGFSYSLTWFVVTVLQI). Topologically, residues 159–173 (SQCPHGQFLGRFETL) are extracellular. A helical membrane pass occupies residues 174–194 (VFYWPSLLCLGFLLGRFLHMF). The Cytoplasmic segment spans residues 195–258 (LKALPVHLGL…CFQFPSRMVG (64 aa)). The helical transmembrane segment at 259–279 (TLLLAFICLYLFIVIEFCVFL) threads the bilayer. Over 280 to 321 (HVRDKLDMFEDKLESYLTHMNETGTLTPIILQVKELISVTKG) the chain is Extracellular. A helical transmembrane segment spans residues 322–342 (VWVVTILPAALTCVTYLFHIL). The Cytoplasmic segment spans residues 343–383 (ACYRKHMKRLWAGDKHFLPQKFHSPSSAASVVAIARYSGWQ). The helical transmembrane segment at 384 to 404 (IAYILWGYLIIHVVQSLCGVM) threads the bilayer. The Extracellular segment spans residues 405-424 (LMYGLVLPIIHHRGLEMLQG). Residues 425–445 (FGLGVLTLSIVVGLIILQVWI) traverse the membrane as a helical segment. The Cytoplasmic segment spans residues 446–476 (AGTFFLQPKLGTSDKQKPLALNNRRAFHNFN). A helical membrane pass occupies residues 477–497 (YFLFFYNVLLGLGACLSRLLI). Residues 498–621 (SCLLGTWLIA…TQILLTCSDC (124 aa)) are Extracellular-facing. A Phosphothreonine modification is found at Thr-612.

Post-translationally, glycosylated. Highly expressed in liver and small intestine. Also expressed in spleen, kidney, colon, stomach, placenta, adipose tissue and isolated adipocytes.

The protein resides in the cell membrane. Functionally, acts as a high-affinity cell-surface receptor for retinol-binding protein RBP4 and mediates RBP4-dependent retinol uptake in the liver. The chain is Stimulated by retinoic acid gene 6 protein-like from Mus musculus (Mouse).